The chain runs to 370 residues: Molybdenum import ATP-binding protein ModC (370 aa).

An ABC transporter domain is found at 1 to 232; the sequence is MLDIDVLRQQ…PDIPDFAAQR (232 aa). ATP is bound at residue 30–37; that stretch reads GRSGAGKT. Positions 292 to 363 constitute a Mop domain; sequence MVSVQNILAA…IKAMSLLRDE (72 aa).

It belongs to the ABC transporter superfamily. Molybdate importer (TC 3.A.1.8) family. The complex is composed of two ATP-binding proteins (ModC), two transmembrane proteins (ModB) and a solute-binding protein (ModA).

It localises to the cell inner membrane. The catalysed reaction is molybdate(out) + ATP + H2O = molybdate(in) + ADP + phosphate + H(+). Its function is as follows. Part of the ABC transporter complex ModABC involved in molybdenum import. Responsible for energy coupling to the transport system. The protein is Molybdenum import ATP-binding protein ModC of Rhodospirillum rubrum (strain ATCC 11170 / ATH 1.1.1 / DSM 467 / LMG 4362 / NCIMB 8255 / S1).